We begin with the raw amino-acid sequence, 424 residues long: Synaptotagmin-1 (424 aa).

The Vesicular segment spans residues 1–60 (MVSESHHEALAAPPATTVAAALPSNVTEPAAPGGGGGKEDAFSNLKKKFMNELNKIPLPP). A glycan (N-linked (GlcNAc...) asparagine) is linked at Asn25. The helical transmembrane segment at 61–82 (WALIAIAIVAVLLILTCCFCLC) threads the bilayer. S-palmitoyl cysteine attachment occurs at residues Cys77, Cys78, Cys80, Cys82, and Cys85. The Cytoplasmic segment spans residues 83-424 (KKCLFKKKNK…EVDAMLAVKK (342 aa)). The disordered stretch occupies residues 117–142 (KDQALKDDDAETGLTDGEEKEEPKEV). The span at 124–136 (DDAETGLTDGEEK) shows a compositional bias: acidic residues. Residues 138 to 384 (EPKEVEKLGK…AIGKVFVGYN (247 aa)) form a phospholipid binding region. C2 domains follow at residues 144 to 263 (KLGK…EEWR) and 275 to 408 (KLGD…AQWH). Ca(2+)-binding residues include Leu174, Asp175, Asp181, Asp233, Phe234, Asp235, Ser238, Lys239, Asp241, Asp306, Asp312, Asp366, Asp368, and Asp374.

Belongs to the synaptotagmin family. In terms of assembly, homotetramer. Ca(2+) serves as cofactor.

It is found in the cytoplasmic vesicle. Its subcellular location is the secretory vesicle membrane. The protein resides in the secretory vesicle. The protein localises to the synaptic vesicle membrane. It localises to the chromaffin granule membrane. It is found in the cytoplasm. Its function is as follows. Calcium sensor that participates in triggering neurotransmitter release at the synapse. May have a regulatory role in the membrane interactions during trafficking of synaptic vesicles at the active zone of the synapse. It binds acidic phospholipids with a specificity that requires the presence of both an acidic head group and a diacyl backbone. May play a role in dendrite formation by melanocytes. In Gallus gallus (Chicken), this protein is Synaptotagmin-1 (SYT1).